Reading from the N-terminus, the 579-residue chain is Pre-mRNA-processing factor 17 (579 aa).

Over residues M1–E19 the composition is skewed to low complexity. 2 disordered regions span residues M1 to A34 and D204 to E237. 7 WD repeats span residues G286 to R326, G330 to R369, T371 to E413, R416 to Y455, P459 to K498, G504 to R545, and A548 to W578.

In terms of assembly, component of the catalytic spliceosome C complexes. Component of the postcatalytic spliceosome P complex. Interacts with PPIL1; this interaction leads to CDC40 isomerization. In terms of processing, undergoes isomerization of the peptide bond between Gly-94 and Pro-95. The reaction is catalyzed by PPIL1.

Its subcellular location is the nucleus. It localises to the nucleus speckle. Its function is as follows. Required for pre-mRNA splicing as component of the activated spliceosome. Plays an important role in embryonic brain development; this function does not require proline peptide bond isomerization. This is Pre-mRNA-processing factor 17 (Cdc40) from Mus musculus (Mouse).